Consider the following 292-residue polypeptide: MGDNEQKALQLMAEAEKKLTQQKGFLGSLFGGSNKVEDAIECYQRAGNMFKMSKNWTKAGECFCEAATLHARAGSRHDAGTCYVDASNCYKKVDVESAVNCLMKSIDIYTDMGRFTMAAKHHQSIAEMYESDPNNLAKSIQHYEQAADYFKGEESVSSANKCMLKVAQYAAQLEDYEKAISIYEQVAASSLESSLLKYSAKEYFFRAALCHLSVDLLNAQHAIEKYAQQYPAFQDSREFKLIKVLCENLEEQNIEGFTEAVKDYDSISRLDQWYTTILLRIKKAADEDPDLR.

This sequence belongs to the SNAP family.

The protein resides in the cytoplasmic vesicle. It localises to the membrane. Its function is as follows. Required for vesicular transport between the endoplasmic reticulum and the Golgi apparatus. Also between the endosome and phagosome. The polypeptide is Alpha-soluble NSF attachment protein (Drosophila melanogaster (Fruit fly)).